The primary structure comprises 282 residues: Glutamyl endopeptidase (282 aa).

The N-terminal stretch at 1-27 (MKKRFLSICTMTIAALATTTMVNTSYA) is a signal peptide. Positions 28–66 (KTDTESHNHSSLGTENKNVLDINSSSHNIKPSQNKSYPS) are excised as a propeptide. Active-site charge relay system residues include His-117, Asp-159, and Ser-235.

Belongs to the peptidase S1B family.

The protein localises to the secreted. The enzyme catalyses Preferential cleavage: Glu-|-Xaa, Asp-|-Xaa.. Exhibits a significant hydrolytic activity for the carbonyl side of glutamic acid. Shows activity toward human fibronectin and type 1 collagen. The sequence is that of Glutamyl endopeptidase (gseA) from Staphylococcus epidermidis (strain ATCC 35984 / DSM 28319 / BCRC 17069 / CCUG 31568 / BM 3577 / RP62A).